Here is a 166-residue protein sequence, read N- to C-terminus: UPF0336 protein MT0525.1 (166 aa).

Residues 8 to 131 (QTLIGKHYRA…VLAEIRSEVT (124 aa)) enclose the MaoC-like domain.

Belongs to the UPF0336 family.

This Mycobacterium tuberculosis (strain CDC 1551 / Oshkosh) protein is UPF0336 protein MT0525.1.